Here is an 854-residue protein sequence, read N- to C-terminus: MAKVAETPMMVQYHEIKSQYPDAFVFYRLGDFYELFEDDAVLGAKLLELTLTARNKNSENPVPMAGIPHHAAQNYIDILVDQGHKVAIVEQMEDPATAKGMVKRDVVQLITPGTKLNSGMGNDKQNNYLAAVLPRDNRYFLSYIDLSTGELKTTTLKRFSDVIDELSSLEVKEIVLLKDDETTELGIANKLAERGLVISTQSDVNVNATVSFLTQPLVHENEAQVTTILLNYIFDTQRRNLDHIIPAQNYERLAYLKFNQDTRTNLDLVKNARTKKKAGSLLGLIDETKTAMGGRLLKQWLLRPLRDTEDINERLDVIEAFQNEFFVRGALQDHLKSVYDLERLAARAAMGTMNARELVQLKRSLSAIPGMKSVLSSSQGILNHASQRLEDMSDLAGLIDEAIVDDPPISIREGDIINDGFDSKIDEYRNVLSQNQKWLAQLESDERAATGINSLKVKYNKNFGFFIEVSRANVSKLEEGRYERKQTLTNAERFVTPELKEHERLINEAQLKRTEREYELFITIRERVKANISRLQKLARQVAQLDVLASLADVADNNRFVRPTFTDDNIINIKQGRHPVVEAILEAGEFVANDVNLDQNTAMQLITGPNMAGKSTYMRELALIVILGQMGSFVPAESAVLPIFDQIFTRIGANDDMAMGQSTFMVEMAEANLALQEASAHSLILFDELGRGTATYDGMALAQAIIEYLDAHVHAKTLFSTHYHELTALADKHENIKNVHVGAVEDESGELHFLHQIQQGPADKSYGIHVAALAGLPDELIANATTILSGLENQEALVPEPKASGLSEQVALFNVSDVDPKTETLFQKLDSINISTMTPLEALNVLAELQKLRK.

Residue Gly608–Ser615 coordinates ATP.

The protein belongs to the DNA mismatch repair MutS family.

Its function is as follows. This protein is involved in the repair of mismatches in DNA. It is possible that it carries out the mismatch recognition step. This protein has a weak ATPase activity. The protein is DNA mismatch repair protein MutS of Leuconostoc mesenteroides subsp. mesenteroides (strain ATCC 8293 / DSM 20343 / BCRC 11652 / CCM 1803 / JCM 6124 / NCDO 523 / NBRC 100496 / NCIMB 8023 / NCTC 12954 / NRRL B-1118 / 37Y).